The sequence spans 284 residues: MNVIEVEDVSFRYGNSREYSLRHINLEIRKGEFLGIIGPSGSGKSTFCLTLNGLIPHSIAGEFHGNVIVDGLNTREHSVSELSTKVGLVFQNPDSQLFNMTVLEEVAFALENLGIERDEMWRRIRWALKLVRLWDKREEFPPNLSGGEKQRLAIASVLVMKPKVLVLDEPTSQLDPLGREEVLGLIKLLNKEEKITIILVEHNTDFLLEHADRIVVFDKGRIVLEGKPEDVFENVEFLRTIGVKLPTRVKIGYELKKRGLVERAVLTRDEVVEVLKWAYLRGKS.

Residues 4 to 244 (IEVEDVSFRY…VEFLRTIGVK (241 aa)) form the ABC transporter domain. 38–45 (GPSGSGKS) lines the ATP pocket.

Belongs to the ABC transporter superfamily.

The protein resides in the cell membrane. Its function is as follows. Probably part of an ABC transporter complex. Responsible for energy coupling to the transport system. The protein is Putative ABC transporter ATP-binding protein PH1815 of Pyrococcus horikoshii (strain ATCC 700860 / DSM 12428 / JCM 9974 / NBRC 100139 / OT-3).